Here is a 366-residue protein sequence, read N- to C-terminus: MTKLRVGLLFGGRSGEHEVSIKSARAIAKALSVDENASKYEILPFYIQKDGRWLAGEAPQKVLETGSPLLEAEQSTSEGNLTSNPQVQTLSKWESPSQVAQVDIWFPVLHGPNGEDGTIQGLLTLMQVPFVGSGVLGSAMGMDKIAMKMTFEQAGLAQVKYKAITRAQVWSNPCVFPKLCDEIEAALGYPAFVKPANLGSSVGIAKVRSRQELEAALDNAASYDRRLVVEAGVVAREVECAVLGNDQPQASVVGEISYDSDFYDYETKYTEDRADLLIPAPIPDAIARQIQDMALQAFAAVDAAGLARVDFFYVEATQEVLINEINTLPGFTATSMYPQLWAHSGVSFPELVDRLIQLALERYSPS.

Residues 148-357 (KMTFEQAGLA…FPELVDRLIQ (210 aa)) enclose the ATP-grasp domain. 184-239 (EAALGYPAFVKPANLGSSVGIAKVRSRQELEAALDNAASYDRRLVVEAGVVAREVE) is an ATP binding site. Asp310, Glu324, and Asn326 together coordinate Mg(2+).

Belongs to the D-alanine--D-alanine ligase family. Mg(2+) serves as cofactor. Mn(2+) is required as a cofactor.

It is found in the cytoplasm. It carries out the reaction 2 D-alanine + ATP = D-alanyl-D-alanine + ADP + phosphate + H(+). The protein operates within cell wall biogenesis; peptidoglycan biosynthesis. In terms of biological role, cell wall formation. The polypeptide is D-alanine--D-alanine ligase (Nostoc punctiforme (strain ATCC 29133 / PCC 73102)).